Here is a 1400-residue protein sequence, read N- to C-terminus: Tensin-2 (1400 aa).

The Phorbol-ester/DAG-type zinc-finger motif lies at 31–79; sequence PHSFREKVFRKKTPVCAVCKVTIDGTGVSCRVCKVATHRKCEAKVTSSC. The residue at position 91 (Thr-91) is a Phosphothreonine. Phosphoserine occurs at positions 118 and 120. In terms of domain architecture, Phosphatase tensin-type spans 122–294; sequence DPLMERRWDL…SYFSGLLSGS (173 aa). Cys-231 serves as the catalytic Phosphocysteine intermediate. Positions 299–425 constitute a C2 tensin-type domain; it reads SSPLFLHYVF…ASVEFVFSSS (127 aa). The tract at residues 425–444 is disordered; the sequence is SPEKVKGNTPRNDPSVSVDY. Over residues 433–444 the composition is skewed to polar residues; the sequence is TPRNDPSVSVDY. Ser-455 is modified (phosphoserine). The residue at position 456 (Tyr-456) is a Phosphotyrosine. Ser-466 bears the Phosphoserine mark. Position 474 is a phosphothreonine (Thr-474). Residue Ser-481 is modified to Phosphoserine. Tyr-483 bears the Phosphotyrosine mark. Residues 488-536 are disordered; it reads RVPRQTPPAPSPELPPPPMLSVSSDSGHSSTLTTEHTAESPGRPPPTAA. Residues 492–506 show a composition bias toward pro residues; the sequence is QTPPAPSPELPPPPM. The residue at position 555 (Arg-555) is an Omega-N-methylarginine. The interval 809-1114 is disordered; it reads CGSPSEGRGY…DVTQPPEHPL (306 aa). 5 positions are modified to phosphoserine: Ser-820, Ser-825, Ser-830, Ser-832, and Ser-835. 2 stretches are compositionally biased toward polar residues: residues 898-917 and 929-940; these read CSASSELSGPSTPLHTSSPV and TRSPSLAPTQRL. Residue Thr-909 is modified to Phosphothreonine. Phosphoserine is present on residues Ser-931, Ser-941, and Ser-972. Phosphothreonine is present on Thr-977. Phosphoserine is present on residues Ser-991 and Ser-1003. Pro residues predominate over residues 1046-1056; that stretch reads PEPPQSSPTPA. The span at 1082–1098 shows a compositional bias: polar residues; sequence SGQQPSPPARSTNQHVT. The residue at position 1087 (Ser-1087) is a Phosphoserine. The SH2 domain occupies 1131–1238; sequence WYKPHLSRDQ…SLPCCLRIPS (108 aa). Thr-1173 carries the post-translational modification Phosphothreonine. Phosphoserine is present on Ser-1238. Residues 1266–1399 enclose the PTB domain; the sequence is ACSVLYLTSV…FITKVLLGQR (134 aa).

The protein belongs to the PTEN phosphatase protein family. As to quaternary structure, interacts with AXL. Interacts with SYK; leading to its phosphorylation. Interacts with SQSTM1 (via PB1 domain); the interaction leads to sequestration of TNS2 in cytoplasmic aggregates with SQSTM1 and promotes TNS2 ubiquitination and proteasomal degradation. Post-translationally, ubiquitinated following sequestration in cytoplasmic aggregates with SQSTM1, leading to proteasomal degradation. In terms of tissue distribution, in the adult kidney, expressed mainly in glomeruli (at protein level). In the newborn kidney, localizes on the basal surface of podocytes along the glomerular basement membrane and not in endothelial cells. Low expression levels in anabolic skeletal muscles.

It localises to the cell junction. It is found in the focal adhesion. The protein resides in the cell membrane. Its subcellular location is the cytoplasm. The enzyme catalyses O-phospho-L-tyrosyl-[protein] + H2O = L-tyrosyl-[protein] + phosphate. Tyrosine-protein phosphatase which regulates cell motility, proliferation and muscle-response to insulin. Phosphatase activity is mediated by binding to phosphatidylinositol-3,4,5-triphosphate (PtdIns(3,4,5)P3) via the SH2 domain. In muscles and under catabolic conditions, dephosphorylates IRS1 leading to its degradation and muscle atrophy. Negatively regulates PI3K-AKT pathway activation. Dephosphorylates nephrin NPHS1 in podocytes which affects mTORC1 complex activity. Under normal glucose conditions, NPHS1 outcompetes IRS1 for binding to phosphatidylinositol 3-kinase (PI3K) which balances mTORC1 activity but high glucose conditions lead to up-regulation of TNS2, increased NPHS1 dephosphorylation and activation of mTORC1, contributing to podocyte hypertrophy and proteinuria. Required for correct podocyte morphology, podocyte-glomerular basement membrane interaction and integrity of the glomerular filtration barrier. Enhances RHOA activation in the presence of DLC1. Plays a role in promoting DLC1-dependent remodeling of the extracellular matrix. The chain is Tensin-2 (Tns2) from Mus musculus (Mouse).